A 142-amino-acid chain; its full sequence is Hemoglobin subunit alpha (142 aa).

Residues 2–142 (HLTADDKKHI…VSNVLTSKYR (141 aa)) form the Globin domain. Residues His-59 and His-88 each coordinate heme b.

It belongs to the globin family. As to quaternary structure, heterotetramer of two alpha chains and two beta chains. As to expression, red blood cells.

Involved in oxygen transport from the lung to the various peripheral tissues. The chain is Hemoglobin subunit alpha (hba-A) from Xenopus tropicalis (Western clawed frog).